Reading from the N-terminus, the 98-residue chain is Cystatin-B (98 aa).

Methionine 1 bears the N-acetylmethionine mark. The Secondary area of contact motif lies at 46 to 50; the sequence is QLVAG.

The protein belongs to the cystatin family. As to quaternary structure, able to form dimers stabilized by noncovalent forces.

Its subcellular location is the cytoplasm. Its function is as follows. This is an intracellular thiol proteinase inhibitor. The sequence is that of Cystatin-B (CSTB) from Ovis aries (Sheep).